We begin with the raw amino-acid sequence, 385 residues long: Putative UDP-N-acetylglucosamine 2-epimerase (385 aa).

The protein belongs to the UDP-N-acetylglucosamine 2-epimerase family.

It is found in the cytoplasm. The enzyme catalyses UDP-N-acetyl-alpha-D-glucosamine = UDP-N-acetyl-alpha-D-mannosamine. This is Putative UDP-N-acetylglucosamine 2-epimerase from Clostridium acetobutylicum (strain ATCC 824 / DSM 792 / JCM 1419 / IAM 19013 / LMG 5710 / NBRC 13948 / NRRL B-527 / VKM B-1787 / 2291 / W).